The primary structure comprises 460 residues: ATP synthase subunit beta (460 aa).

150–157 provides a ligand contact to ATP; the sequence is GGAGVGKT.

The protein belongs to the ATPase alpha/beta chains family. In terms of assembly, F-type ATPases have 2 components, CF(1) - the catalytic core - and CF(0) - the membrane proton channel. CF(1) has five subunits: alpha(3), beta(3), gamma(1), delta(1), epsilon(1). CF(0) has three main subunits: a(1), b(2) and c(9-12). The alpha and beta chains form an alternating ring which encloses part of the gamma chain. CF(1) is attached to CF(0) by a central stalk formed by the gamma and epsilon chains, while a peripheral stalk is formed by the delta and b chains.

It is found in the cell inner membrane. The catalysed reaction is ATP + H2O + 4 H(+)(in) = ADP + phosphate + 5 H(+)(out). Its function is as follows. Produces ATP from ADP in the presence of a proton gradient across the membrane. The catalytic sites are hosted primarily by the beta subunits. In Salmonella gallinarum (strain 287/91 / NCTC 13346), this protein is ATP synthase subunit beta.